The following is a 285-amino-acid chain: Diaminopimelate epimerase (285 aa).

Substrate is bound by residues Asn15 and Asn68. The active-site Proton donor is the Cys77. Residues 78-79 (GN), Asn165, Asn201, and 219-220 (ER) each bind substrate. Cys228 (proton acceptor) is an active-site residue. 229–230 (GT) provides a ligand contact to substrate.

Belongs to the diaminopimelate epimerase family. As to quaternary structure, homodimer.

It localises to the cytoplasm. It catalyses the reaction (2S,6S)-2,6-diaminopimelate = meso-2,6-diaminopimelate. Its pathway is amino-acid biosynthesis; L-lysine biosynthesis via DAP pathway; DL-2,6-diaminopimelate from LL-2,6-diaminopimelate: step 1/1. Catalyzes the stereoinversion of LL-2,6-diaminopimelate (L,L-DAP) to meso-diaminopimelate (meso-DAP), a precursor of L-lysine and an essential component of the bacterial peptidoglycan. The chain is Diaminopimelate epimerase from Synechococcus sp. (strain JA-2-3B'a(2-13)) (Cyanobacteria bacterium Yellowstone B-Prime).